The chain runs to 232 residues: Ribonuclease 3 (232 aa).

The region spanning 5–134 (QTVLKNHFAI…FLGALLLDKD (130 aa)) is the RNase III domain. Glu47 contributes to the Mg(2+) binding site. The active site involves Asp51. Residues Asp120 and Glu123 each contribute to the Mg(2+) site. Residue Glu123 is part of the active site. One can recognise a DRBM domain in the interval 160–229 (DYKTHLQELL…AKNAVEKGLD (70 aa)).

The protein belongs to the ribonuclease III family. Homodimer. The cofactor is Mg(2+).

It localises to the cytoplasm. It catalyses the reaction Endonucleolytic cleavage to 5'-phosphomonoester.. In terms of biological role, digests double-stranded RNA. Involved in the processing of primary rRNA transcript to yield the immediate precursors to the large and small rRNAs (23S and 16S). Processes some mRNAs, and tRNAs when they are encoded in the rRNA operon. Processes pre-crRNA and tracrRNA of type II CRISPR loci if present in the organism. In Streptococcus pneumoniae (strain Hungary19A-6), this protein is Ribonuclease 3.